Here is an 89-residue protein sequence, read N- to C-terminus: UPF0147 protein TV0625 (89 aa).

This sequence belongs to the UPF0147 family.

The chain is UPF0147 protein TV0625 from Thermoplasma volcanium (strain ATCC 51530 / DSM 4299 / JCM 9571 / NBRC 15438 / GSS1).